We begin with the raw amino-acid sequence, 262 residues long: Transmembrane protein 270 (262 aa).

5 helical membrane-spanning segments follow: residues 6–26, 30–50, 67–87, 92–112, and 127–147; these read LVRSSLSGTLLVVVKLSALLI, AHLYNFLLLKIFLFNHWLLGL, PVGRVLWAGLTLLEVPVCLAL, LVWAGLLGCARALGLGPKWLG, and LFLSCLHSLMLAALLLLLLVW. The disordered stretch occupies residues 226-262; the sequence is QEAEPQKALGLSSETPPPGPPAPGARPVLPEPGTPGE. Over residues 240–262 the composition is skewed to pro residues; that stretch reads TPPPGPPAPGARPVLPEPGTPGE.

It is found in the membrane. The chain is Transmembrane protein 270 from Bos taurus (Bovine).